A 390-amino-acid polypeptide reads, in one-letter code: Uroporphyrinogen decarboxylase 2, chloroplastic (390 aa).

A chloroplast-targeting transit peptide spans 1–30 (MATACPPLSLQPAYLSGRSARARRPPPAVR). Substrate is bound by residues 70 to 74 (RQAGR), phenylalanine 89, serine 119, aspartate 120, tyrosine 197, serine 252, and histidine 367.

Belongs to the uroporphyrinogen decarboxylase family. In terms of assembly, homodimer.

It is found in the plastid. Its subcellular location is the chloroplast. It catalyses the reaction uroporphyrinogen III + 4 H(+) = coproporphyrinogen III + 4 CO2. It functions in the pathway porphyrin-containing compound metabolism; protoporphyrin-IX biosynthesis; coproporphyrinogen-III from 5-aminolevulinate: step 4/4. In terms of biological role, catalyzes the decarboxylation of four acetate groups of uroporphyrinogen-III to yield coproporphyrinogen-III. The sequence is that of Uroporphyrinogen decarboxylase 2, chloroplastic from Oryza sativa subsp. japonica (Rice).